A 176-amino-acid chain; its full sequence is Inner membrane-spanning protein YciB (176 aa).

6 consecutive transmembrane segments (helical) span residues 3 to 23 (FLFD…WGIF), 24 to 44 (TATA…AFRH), 49 to 69 (TMLW…LVLH), 72 to 92 (KFIQ…LLAA), 121 to 141 (LAWA…VHNF), and 149 to 169 (FKLF…SLWL).

The protein belongs to the YciB family.

The protein localises to the cell inner membrane. Functionally, plays a role in cell envelope biogenesis, maintenance of cell envelope integrity and membrane homeostasis. The chain is Inner membrane-spanning protein YciB from Burkholderia cenocepacia (strain ATCC BAA-245 / DSM 16553 / LMG 16656 / NCTC 13227 / J2315 / CF5610) (Burkholderia cepacia (strain J2315)).